The sequence spans 1103 residues: A disintegrin and metalloproteinase with thrombospondin motifs 10 (1103 aa).

The first 25 residues, 1 to 25 (MAPACQILRWALALGLGLMFEVTHA), serve as a signal peptide directing secretion. The propeptide occupies 26–233 (FRSQDEFLSS…TERGQPGLKR (208 aa)). 3 N-linked (GlcNAc...) asparagine glycosylation sites follow: Asn90, Asn222, and Asn323. The interval 213-233 (KPPPARPLGNETERGQPGLKR) is disordered. The Peptidase M12B domain occupies 239 to 457 (RYVETLVVAD…GLGLCLNNRP (219 aa)). 11 disulfide bridges follow: Cys315–Cys376, Cys351–Cys358, Cys370–Cys452, Cys409–Cys436, Cys479–Cys501, Cys490–Cys508, Cys496–Cys531, Cys521–Cys536, Cys559–Cys596, Cys563–Cys601, and Cys574–Cys586. Residue His392 coordinates Zn(2+). The active site involves Glu393. The Zn(2+) site is built by His396 and His402. The 87-residue stretch at 460-546 (QDFVYPTVAP…VPFGSRPEGV (87 aa)) folds into the Disintegrin domain. The TSP type-1 1 domain occupies 547–602 (DGAWGPWTPWGDCSRTCGGGVSSSSRHCDSPRPTIGGKYCLGERRRHRSCNTDDCP). The tract at residues 706-828 (ETIEGVFSPA…IARDSLPPYS (123 aa)) is spacer. N-linked (GlcNAc...) asparagine glycosylation is found at Asn740 and Asn795. 4 TSP type-1 domains span residues 825–883 (PPYS…NTEP), 884–945 (CPPD…PTCP), 947–1001 (EWAA…NLRR), and 1003–1058 (PPAR…AKCD). N-linked (GlcNAc...) asparagine glycosylation occurs at Asn892. Residues 1065-1103 (GPEECKDVNKVAYCPLVLKFQFCSRAYFRQMCCKTCHGH) form the PLAC domain.

In terms of assembly, interacts with FBN1; this interaction promotes microfibrils assembly. Zn(2+) serves as cofactor. Glycosylated. Can be O-fucosylated by POFUT2 on a serine or a threonine residue found within the consensus sequence C1-X(2)-(S/T)-C2-G of the TSP type-1 repeat domains where C1 and C2 are the first and second cysteine residue of the repeat, respectively. Fucosylated repeats can then be further glycosylated by the addition of a beta-1,3-glucose residue by the glucosyltransferase, B3GALTL. Fucosylation mediates the efficient secretion of ADAMTS family members. Can also be C-glycosylated with one or two mannose molecules on tryptophan residues within the consensus sequence W-X-X-W of the TPRs, and N-glycosylated. These other glycosylations can also facilitate secretion. In terms of tissue distribution, widely expressed in adult tissues.

The protein localises to the secreted. The protein resides in the extracellular space. It is found in the extracellular matrix. In terms of biological role, metalloprotease that participate in microfibrils assembly. Microfibrils are extracellular matrix components occurring independently or along with elastin in the formation of elastic tissues. The polypeptide is A disintegrin and metalloproteinase with thrombospondin motifs 10 (ADAMTS10) (Homo sapiens (Human)).